Consider the following 441-residue polypeptide: Pre-mRNA-splicing factor PRP46 (441 aa).

2 disordered regions span residues 1 to 22 (MPVA…NEPS) and 81 to 107 (MGAS…LTNL). The span at 83–107 (ASSSALTKHTPSASQPTTHDSLTNL) shows a compositional bias: polar residues. WD repeat units lie at residues 130–169 (GHQG…LRLT), 172–211 (GHIM…VVRH), 214–253 (GHLS…PVVV), 256–295 (GHKS…TMTT), 298–336 (HHKK…LVLN), 339–379 (DQNA…QSTQ), and 388–427 (ESEN…TAES).

It belongs to the WD repeat PRL1/PRL2 family. Associated with the spliceosome.

Its subcellular location is the cytoplasm. The protein resides in the nucleus. Its function is as follows. Involved in pre-mRNA splicing and required for cell cycle progression at G2/M. The sequence is that of Pre-mRNA-splicing factor PRP46 (PRP46) from Yarrowia lipolytica (strain CLIB 122 / E 150) (Yeast).